Reading from the N-terminus, the 82-residue chain is Small ribosomal subunit protein bS16 (82 aa).

It belongs to the bacterial ribosomal protein bS16 family.

This is Small ribosomal subunit protein bS16 from Vibrio parahaemolyticus serotype O3:K6 (strain RIMD 2210633).